The primary structure comprises 384 residues: MGRVAVRTFGVEEELLIADPVDGMPLALASGILDVAGFSETDNSSDAGPSLKSEFKQEQIEVNSLPCRTAKELRAEIRAGRALADSAARAVGARVAALATPPVFHATPTAGNQRYAAMGTEFGLISREQLTCGFHVHVSIESPEEGVAVLDRMRHWLPVLLALSANSPFWMGADTGFASYRTQIWNRWPTAGPMDVFGSADGYRQVLSELLGTGVPLDEGMIYFDARLSRGHPTVEVRIADVCLYAEDALTIAILARALVETSASEWRKGEPPSGVMTPVIRMANWKASRFGVTNQLLHPLEQAPFAAADVAGALLRHIRRALTESGDLALARTGVANILRRGTGERLQRQAYGRRFRLSDVVSTAIASTHNYGERSDAGLLSR.

The protein belongs to the glutamate--cysteine ligase type 2 family. YbdK subfamily.

It carries out the reaction L-cysteine + L-glutamate + ATP = gamma-L-glutamyl-L-cysteine + ADP + phosphate + H(+). Functionally, ATP-dependent carboxylate-amine ligase which exhibits weak glutamate--cysteine ligase activity. The sequence is that of Putative glutamate--cysteine ligase 2-1 from Paenarthrobacter aurescens (strain TC1).